A 104-amino-acid chain; its full sequence is Large ribosomal subunit protein uL23 (104 aa).

Belongs to the universal ribosomal protein uL23 family. As to quaternary structure, part of the 50S ribosomal subunit. Contacts protein L29, and trigger factor when it is bound to the ribosome.

Functionally, one of the early assembly proteins it binds 23S rRNA. One of the proteins that surrounds the polypeptide exit tunnel on the outside of the ribosome. Forms the main docking site for trigger factor binding to the ribosome. The sequence is that of Large ribosomal subunit protein uL23 from Leptospira interrogans serogroup Icterohaemorrhagiae serovar copenhageni (strain Fiocruz L1-130).